We begin with the raw amino-acid sequence, 403 residues long: Putative queuine tRNA-ribosyltransferase (403 aa).

Asp-91 (proton acceptor) is an active-site residue. Substrate is bound by residues 91–95 (DSGGF), Asp-177, Gln-218, and Gly-245. The RNA binding stretch occupies residues 275–281 (GIGAIED). Asp-294 serves as the catalytic Nucleophile. The interval 299–303 (ARWAR) is RNA binding; important for wobble base 34 recognition. Residues Cys-341, Cys-343, Cys-346, and His-372 each contribute to the Zn(2+) site.

This sequence belongs to the queuine tRNA-ribosyltransferase family. As to quaternary structure, homodimer. Within each dimer, one monomer is responsible for RNA recognition and catalysis, while the other monomer binds to the replacement base PreQ1. Zn(2+) serves as cofactor.

It catalyses the reaction 7-aminomethyl-7-carbaguanine + guanosine(34) in tRNA = 7-aminomethyl-7-carbaguanosine(34) in tRNA + guanine. In terms of biological role, catalyzes the base-exchange of a guanine (G) residue with the queuine precursor 7-aminomethyl-7-deazaguanine (PreQ1) at position 34 (anticodon wobble position) in tRNAs with GU(N) anticodons (tRNA-Asp, -Asn, -His and -Tyr). Catalysis occurs through a double-displacement mechanism. The nucleophile active site attacks the C1' of nucleotide 34 to detach the guanine base from the RNA, forming a covalent enzyme-RNA intermediate. The proton acceptor active site deprotonates the incoming PreQ1, allowing a nucleophilic attack on the C1' of the ribose to form the product. After dissociation, two additional enzymatic reactions on the tRNA convert PreQ1 to queuine (Q), resulting in the hypermodified nucleoside queuosine (7-(((4,5-cis-dihydroxy-2-cyclopenten-1-yl)amino)methyl)-7-deazaguanosine). The chain is Putative queuine tRNA-ribosyltransferase from Archaeoglobus fulgidus (strain ATCC 49558 / DSM 4304 / JCM 9628 / NBRC 100126 / VC-16).